The primary structure comprises 257 residues: Fimbrial assembly protein, serogroup E1 (257 aa).

The protein is Fimbrial assembly protein, serogroup E1 (fimB) of Dichelobacter nodosus (Bacteroides nodosus).